The following is a 183-amino-acid chain: Gamma-crystallin N (183 aa).

Beta/gamma crystallin 'Greek key' domains follow at residues 6–46, 47–89, 95–136, and 138–180; these read GKII…RVET, GAWI…KPVR, YRLE…KVYG, and GAWV…RRVV.

Belongs to the beta/gamma-crystallin family. As to quaternary structure, monomer.

Functionally, crystallins are the dominant structural components of the vertebrate eye lens. The chain is Gamma-crystallin N (crygn) from Xenopus tropicalis (Western clawed frog).